The sequence spans 237 residues: Probable transcriptional regulatory protein Mfl546 (237 aa).

A disordered region spans residues 1-20; the sequence is MGRAHEVRAASMAKTAAKKS. Over residues 9-20 the composition is skewed to low complexity; sequence AASMAKTAAKKS.

It belongs to the TACO1 family.

It is found in the cytoplasm. In Mesoplasma florum (strain ATCC 33453 / NBRC 100688 / NCTC 11704 / L1) (Acholeplasma florum), this protein is Probable transcriptional regulatory protein Mfl546.